Consider the following 436-residue polypeptide: Cyclic GMP-AMP synthase (436 aa).

Residue 112 to 117 (QGSFQY) coordinates GTP. The Mg(2+) site is built by D131 and D133. Residue R182 participates in ATP binding. Residue D193 participates in Mg(2+) binding. Residue S259 coordinates ATP. GTP-binding residues include K287, S301, and D348. 2 disordered regions span residues 339-358 (RGVESPDSTDEKPLFPPSYK) and 417-436 (AQEPSSASKPEKISSTMVSG). Positions 419 to 436 (EPSSASKPEKISSTMVSG) are enriched in polar residues. A Glycyl lysine isopeptide (Gly-Lys) (interchain with K-? in acceptor proteins) cross-link involves residue G436.

The protein belongs to the CD-NTase family. A01 subfamily. Monomer. Interacts with Cap2 in the presence and absence of phage T2. A Cap2 dimer is bound on either side by a DncV monomer. Requires Mg(2+) as cofactor. Post-translationally, in bacteria expressing capV-cdnD-cap2, this protein is conjugated to a number of other proteins (by Cap2 via this protein's C-terminal Gly residue), many of which are involved in metabolism. More conjugated protein is found in the absence of Cap3.

It carries out the reaction GTP + ATP = 3',3'-cGAMP + 2 diphosphate. Primed for activation by Cap2 which conjugates it to cellular proteins; priming is target protein-specific (green fluorescent protein does not activate the enzyme), but which protein(s) activate is unclear. Enzymatic activity of DncV is inhibited by folate-like molecules, such as 5-methyltetrahydrofolate di-glutamate and 5-methyltetrahydrofolate, suggesting the existence of a signaling pathway that links folate-like metabolism cofactors to the regulation of cyclic dinucleotide second messenger synthesis. Lacks a regulatory loop and is constitutively activated. In terms of biological role, cyclic nucleotide synthase (second messenger synthase) of a CBASS antivirus system. CBASS (cyclic oligonucleotide-based antiphage signaling system) provides immunity against bacteriophages. The CD-NTase protein (DncV, this protein) synthesizes cyclic nucleotides in response to infection; these serve as specific second messenger signals. The signals activate a diverse range of effectors, leading to bacterial cell death and thus abortive phage infection. A type II-A(GA) CBASS system. Functionally, catalyzes the synthesis of 3',3'-cyclic GMP-AMP (cGAMP), a second messenger in cell signal transduction, from GTP and ATP in response to phage infection. Also able to produce c-di-AMP and c-di-GMP from ATP and GTP, respectively; however, cGAMP is the dominant molecule produced by DncV in vivo, contrary to the 2'3'-cGAMP produced by eukaryotes. Is required for efficient V.cholerae intestinal colonization, and down-regulates the colonization-influencing process of chemotaxis. Is not active with dATP, TTP, UTP or CTP. Its product controls the activity of cGAMP-activated phospholipase CapV, a patatin-like lipase that is a direct cGAMP receptor encoded in the dncV operon. Its function is as follows. Protects E.coli against phage infection. When the CBASS operon (capV-dncV-cap2-cap3) is introduced in E.coli MG1655 there is about 100-fold protection against phages P1 and T2. When the operon is introduced in E.coli MG1655 there is a more than 10(3) decrease in the efficiency of T2 plaque formation. Protects 100-fold against phage T5, offers no protection against T7. When the operon is introduced in E.coli MG1655 it protects against phages T2, T4, T5 and T6. Another paper shows the operon confers protection against phages P1, T2, T5 and T6 but not T4 or lambda. In Vibrio cholerae serotype O1 (strain ATCC 39315 / El Tor Inaba N16961), this protein is Cyclic GMP-AMP synthase.